The chain runs to 593 residues: Proteasome-associated ATPase (593 aa).

Residues 5-94 (DDADSRAARW…KEEIDRLAQP (90 aa)) adopt a coiled-coil conformation. 281-286 (GCGKTL) provides a ligand contact to ATP. The disordered stretch occupies residues 574–593 (GKGADAGRSIETASNTGQYL). A compositionally biased stretch (polar residues) spans 584–593 (ETASNTGQYL). The interval 592 to 593 (YL) is docks into pockets in the proteasome alpha-ring.

Belongs to the AAA ATPase family. As to quaternary structure, homohexamer. Assembles into a hexameric ring structure that caps the 20S proteasome core. Strongly interacts with the prokaryotic ubiquitin-like protein Pup through a hydrophobic interface; the interacting region of ARC lies in its N-terminal coiled-coil domain. There is one Pup binding site per ARC hexamer ring. Upon ATP-binding, the C-terminus of ARC interacts with the alpha-rings of the proteasome core, possibly by binding to the intersubunit pockets.

It functions in the pathway protein degradation; proteasomal Pup-dependent pathway. In terms of biological role, ATPase which is responsible for recognizing, binding, unfolding and translocation of pupylated proteins into the bacterial 20S proteasome core particle. May be essential for opening the gate of the 20S proteasome via an interaction with its C-terminus, thereby allowing substrate entry and access to the site of proteolysis. Thus, the C-termini of the proteasomal ATPase may function like a 'key in a lock' to induce gate opening and therefore regulate proteolysis. This Salinispora tropica (strain ATCC BAA-916 / DSM 44818 / JCM 13857 / NBRC 105044 / CNB-440) protein is Proteasome-associated ATPase.